The sequence spans 923 residues: Smoothelin (923 aa).

The residue at position 2 (alanine 2) is an N-acetylalanine. The stretch at 24–89 forms a coiled coil; it reads LAERRRIRSA…ARLAGRLESM (66 aa). A disordered region spans residues 134–456; it reads SRLPSSGPRE…GTGEPGGSMK (323 aa). Composition is skewed to low complexity over residues 164-179 and 192-205; these read QEQQ…TPED and RAPP…PASP. The span at 237-252 shows a compositional bias: pro residues; that stretch reads LPHPSEAPSPEPPMSP. Polar residues-rich tracts occupy residues 272–285 and 293–314; these read PSDT…FSNT and TKSC…NREP. Residues serine 299, serine 301, serine 304, and serine 340 each carry the phosphoserine modification. Residues threonine 359 and threonine 372 each carry the phosphothreonine modification. Residues 366 to 389 show a composition bias toward low complexity; that stretch reads PSLISTTPASSSSSNSSSPSPSDT. Serine 501, serine 521, and serine 574 each carry phosphoserine. 2 disordered regions span residues 542 to 578 and 615 to 772; these read KMEP…PLSA and QRKR…ARKA. Positions 601–628 form a coiled coil; that stretch reads EERKLIRAALRELRQRKRDQRDKERERR. Over residues 615–638 the composition is skewed to basic and acidic residues; the sequence is QRKRDQRDKERERRLREARARPGE. Serine 641 is modified (phosphoserine). Residues 674 to 687 are compositionally biased toward polar residues; the sequence is NDGTQTARTTTVES. The segment covering 697–721 has biased composition (low complexity); it reads SSSSSTTTTTVQTKSFSSSSSSSSS. The residue at position 735 (serine 735) is a Phosphoserine. A compositionally biased stretch (basic and acidic residues) spans 744 to 756; the sequence is LERRQAEKKKELM. A Phosphoserine modification is found at serine 798. A Calponin-homology (CH) domain is found at 805–912; sequence NSIKQMLLDW…YVQSLYNHLR (108 aa).

Belongs to the smoothelin family.

It localises to the cytoplasm. It is found in the cytoskeleton. Structural protein of the cytoskeleton. In Mus musculus (Mouse), this protein is Smoothelin (Smtn).